The chain runs to 176 residues: Centromere protein R (176 aa).

Lys8 is covalently cross-linked (Glycyl lysine isopeptide (Lys-Gly) (interchain with G-Cter in SUMO2)). A Phosphoserine modification is found at Ser17. The tract at residues 20 to 50 (PSKIMRKKSITAFSPTTGTYQLSPFSSPRTP) is DD1. A Glycyl lysine isopeptide (Lys-Gly) (interchain with G-Cter in SUMO2) cross-link involves residue Lys22. Ser28 is subject to Phosphoserine. Polar residues predominate over residues 34-48 (PTTGTYQLSPFSSPR). Residues 34-80 (PTTGTYQLSPFSSPRTPKEQEHRDGPSNGTRKWSVLSSPARQDSTVK) are disordered. Basic and acidic residues predominate over residues 49-58 (TPKEQEHRDG). Residues 60–80 (SNGTRKWSVLSSPARQDSTVK) are compositionally biased toward polar residues. The short motif at 63 to 66 (TRKW) is the Nuclear localization signal element. Ser71 is subject to Phosphoserine. Residues 82–112 (SDGFMMLLSKIERSSEKTMEIMKNLSSLQAL) are a coiled coil. An LXXLL motif motif is present at residues 118 to 122 (LEDLL). Residues 171–175 (LKAIL) carry the LXXIL motif motif.

As to quaternary structure, homodimer; mediated by the coiled coil domain. Interacts with CCNA2 and MTA1. Interacts with NFKB1 NF-kappa-B subunit. Component of the CENPA-CAD complex, composed of CENPI, CENPK, CENPL, CENPO, CENPP, CENPQ, CENPR and CENPS. The CENPA-CAD complex interacts with the CENPA-NAC complex, at least composed of CENPA, CENPC, CENPH, CENPM, CENPN, CENPT and CENPU. Interacts with TASOR.

The protein resides in the nucleus. Its subcellular location is the chromosome. It localises to the centromere. It is found in the kinetochore. Its function is as follows. Transcription coregulator that can have both coactivator and corepressor functions. Involved in the coactivation of nuclear receptors for retinoid X (RXRs) and thyroid hormone (TRs) in a ligand-dependent fashion. In contrast, it does not coactivate nuclear receptors for retinoic acid, vitamin D, progesterone receptor, nor glucocorticoid. Acts as a coactivator for estrogen receptor alpha. Acts as a transcriptional corepressor via its interaction with the NFKB1 NF-kappa-B subunit, possibly by interfering with the transactivation domain of NFKB1. Induces apoptosis in breast cancer cells, but not in other cancer cells, via a caspase-2 mediated pathway that involves mitochondrial membrane permeabilization but does not require other caspases. May also act as an inhibitor of cyclin A-associated kinase. Also acts a component of the CENPA-CAD (nucleosome distal) complex, a complex recruited to centromeres which is involved in assembly of kinetochore proteins, mitotic progression and chromosome segregation. May be involved in incorporation of newly synthesized CENPA into centromeres via its interaction with the CENPA-NAC complex. The polypeptide is Centromere protein R (Itgb3bp) (Rattus norvegicus (Rat)).